Reading from the N-terminus, the 520-residue chain is Transcription factor MYB33 (520 aa).

The segment at 1–24 is disordered; sequence MSYTSTDSDHNESPAADDNGSDCR. HTH myb-type domains lie at 29 to 81 and 82 to 136; these read GHAL…ANHL and RPNL…KRRQ. DNA-binding regions (H-T-H motif) lie at residues 57–81 and 109–132; these read WNAV…ANHL and WARM…NTRI. Positions 331-342 are enriched in low complexity; sequence SSSPPHSDLLDP. Disordered regions lie at residues 331–359 and 426–447; these read SSSP…GEES and EMST…RKPL.

Mostly expressed in stems, shoot apices, flowers and floral shoot tips, and, to a lower extent, in roots (e.g. root tips), seedlings, leaves and siliques.

It localises to the nucleus. Transcriptional activator of alpha-amylase expression that binds to 5'-CAACTGTC-3' motif in target gene promoter. Positive regulator of abscisic acid (ABA) responses leading to growth arrest during seed germination. In vegetative tissues, inhibits growth by reducing cell proliferation. Promotes the expression of aleurone-related genes (e.g. CP1, CP, GASA1, BXL1 and BXL2) in seeds. Together with MYB65 and MYB101, promotes the programmed cell death (PCD) the vacuolation of protein storage vacuoles (PSVs) in the aleurone layers during seed germination. Binds to a GARE site (GA-response element) in the LEAFY promoter, essential for its gibberellic acid (GA)-mediated induction. Together with MYB65, facilitates anther and tapetum development. The polypeptide is Transcription factor MYB33 (Arabidopsis thaliana (Mouse-ear cress)).